The chain runs to 69 residues: Beta-defensin 122 (69 aa).

Residues 1–19 (MKPFLVTLAVLLLFFQVTA) form the signal peptide. 3 disulfide bridges follow: Cys-26-Cys-53, Cys-33-Cys-47, and Cys-37-Cys-54.

This sequence belongs to the beta-defensin family.

Its subcellular location is the secreted. Functionally, has antibacterial activity. This is Beta-defensin 122 (DEFB122) from Macaca mulatta (Rhesus macaque).